Reading from the N-terminus, the 204-residue chain is dITP/XTP pyrophosphatase (204 aa).

7 to 12 lines the substrate pocket; the sequence is TNNKDK. Mg(2+) is bound by residues aspartate 38 and aspartate 74. The Proton acceptor role is filled by aspartate 74. Substrate contacts are provided by residues serine 75, 156 to 159, lysine 179, and 184 to 185; these read FGYD and HR.

Belongs to the HAM1 NTPase family. Homodimer. It depends on Mg(2+) as a cofactor.

It catalyses the reaction XTP + H2O = XMP + diphosphate + H(+). The enzyme catalyses dITP + H2O = dIMP + diphosphate + H(+). The catalysed reaction is ITP + H2O = IMP + diphosphate + H(+). Pyrophosphatase that catalyzes the hydrolysis of nucleoside triphosphates to their monophosphate derivatives, with a high preference for the non-canonical purine nucleotides XTP (xanthosine triphosphate), dITP (deoxyinosine triphosphate) and ITP. Seems to function as a house-cleaning enzyme that removes non-canonical purine nucleotides from the nucleotide pool, thus preventing their incorporation into DNA/RNA and avoiding chromosomal lesions. The protein is dITP/XTP pyrophosphatase of Campylobacter fetus subsp. fetus (strain 82-40).